A 2883-amino-acid polypeptide reads, in one-letter code: MSCNGGSHPRINTLGRMTRAESGPDLRYEMTYSGGGGGGGGGGGGGTSRTFYSHSRRCTVNDQNSDGYCQTGTMSRHQNQNTIQEMLQNCSDCLMRAELIAQPELKFGEGMQLAWNRELDEYFTQANDQMEIIDGLIREMRQMGQPCDAYQKRLLQLQEQMRALYKAISVPRVRRASSKGAGGYTCQSGSGWDEFTKRLTGECLGWMRQQREEMDLMAWGVDAGSVEQHINSHRSIHNTIGDYRWQLDKIKADLREKSAIYQLEEEYENLLKASFERMDHLRQLQNIIQATSREIMWINDCEEEELLYDWSDKNTNIAQKQEAFSIRMSQLEVKEKELNKLKQESDQLVLNQHPASDKIEAYMDTLQTQWSWILQITKCIDVHLKENAAYFQFFEEAQSTEAYLKGLQDSIRKKYPCDKNMPLQHLLEQIKELEKEREKIIEYKRQVQNLVNKSKKIVQLKPRNPDYRSNKPIILRALCDYKQDQKIVHKGDECILKDNNERSKWYVTGPGGVDMLVPSVGLIIPPPNPLAVDLSCKIEQYYEAILALWNQLYINMKSLVSWHYCMIDIEKIRAMTIAKLKTMRQEDYMKTIEDLELHYQDFIKNSQGSEMFGDDDKRRMQSQFTDAQKHYQTLVIQLPGHPQHQTVTKTEITHLGTCQDVNHNKVIETNRENDKQETWLLMELQKIRRQMEHCEARMTLKNLLLAEQGSTHHITVKINELKSVQNDSQALAEVLNQLKDMLANFRGSEKYCYLQNEIFGLFQKLENINGVSDGYLNSLCSVRALLQAILQTEDMLKVYEARLTEEETVCLDLDKVEAYRCGLKKIKNDLNLKKSLLATMKTELQKAQQIHSQSSQQYPLYDLDLGKFTEKVTQLTDRWQKIDKQIDFRLWDLEKQIKQLRNYRDNYQSFCKWLYDAKRRQDSLESMKFGDSNTVMRFLNEQKNLHSEISGKRDKSEEVHKIAELCANSIKDYELQLASYTSGLETLLNIPIKRTMVQSPSGVILQEAADIHARYIELLTRSGDYYRFLSEMLKSLEDLKLKNTKIEVLEEELRLARDANSENCNKNKFLDQNLQKYQAECSQFKAKLVSLEELKRQAELDGKSAKQNLDKCYGQIKELNEKITRLTYEIEDEKRRRKTVEDRFDQQKNDYDQLQKARQCEKENLSWQKLESEKAIKEKEYEIERLRVLLQEEGARKREYENELAKVRNHYNEEMSNLRNKYETEINITKTTIKEISMQKEDDSKNLRNQMDRLSRENRDLKDEIVRLNDSILQATEQRRRAEENALQQKACGSETMQKKQRLEIELKQVIQQRSEDNARHKQSLEEAAKTIQDKNKEIERLKAEYQEEAKRRWEYENELSKVRNSYDEEIISLKNQFETEINITKTTIHQLTMQKEEDTSGYRAQIDNLTRENRSLCEEVKRLKNTLAQTTENLRRVEENAQQQKATGSEMSQRKQQLEIELRQVTQMRTEESMRYKQSLDDAAKTIQDKNKEIERLKQLVDKETNERKCLEDENSKLQRVQYDLQKANNSATEAMSKLKVQEQELTRLRIDYERVSQERTVKDQDITRIQSSLKDLQLQKQKAEEELSRLKRTASDESSKRKMLEEELEAMRRSLKEQAVKITNLTQQLEQASIVKKRSEDDLRQQRDVLDGHVREKQRTQEELRRLSLDVEALRRQLVQEQENVKQAHLRNEHFQKAIEDKSRSLNESKIEIERLQSLTENLTKEHLMLEEELRNLRLEYDDLRRGRSEADSDKNSTISELRSQLQISNNRTLELQGLINDLQRERENLRQEIEKFQKQALEASNRIQESKSQCTQVVQERESLLVKIKVLEQDKARLQRLEDELNRAKATLEAESRVKQRLECEKQQIQNDLNQWKTQYSRKEETIRKIESEREKSEREKNSLRSEIERLQAEIKRIEERCRRKLEDSSRETQSQLESERCRLQKEIEKLRQRPYGSHRETQTEYEWTVDSSKLVFDGLRKKVTAMQLYECQLIDKTTLDKLLKGKKSVEEVASEIQPFLRGAGAIAGASASPKEKYSLVEAKRKKFITPESTVMLLEAQAATGGIIDPHRNEKLTVDNAVARDLIDFDDRQQIYTAEKAITGFDDPFSGKTVSVSEAIKKNLIDRETGMRLLEAQLASGGVVDPVNSVFLPKDVALARGLIDRDLYRSLNDPRDSQKNFVDPITKKKVSYMQLRERCRIEPHTGLLLLSVQKRSMSFQGIRQPVTVTELVDSGILRPSTVNELESGQISYDEVGERIKDFLQGSSCIAGIYNETTKQKLGIYEAMKIGLVRPGTALELLEAQAATGFIVDPVSNLRLPVEEAYKRGLVGIEFKEKLLSAERAVTGYNDPETGNIISLFQAMNKELIEKGHGIRLLEAQIATGGIIDPKESHRLPVDMAYKRGYFNEELSEILSDPSDDTKGFFDPNTEENLTYLQLKERCIKDEETGLCLLPLKEKKKQVQTSQKNTLRKRRVVIVDPETNKEMSVQEAYKKGLIDYDTFKELCEQECEWEEITITGSDGSTRVVLVDRKTGSQYDIQDAIDKGLVDRKFFDQYRSGSLSLTQFADMISLKNGVGNSSGLGGSVNDDVFSSSRHDSVSKISTISSVRNLTIRSSSLSDPLEESSPIAAIFDTENLEKISIAEGIERGIVDSITGQRLLEAQACTGGIIHPTTGQKLSLQDAVNQGLIDQDMATRLKPAQKAFIGFEGVKGKKKMSAAEAVKEKWLPYEAGQRFLEFQFLTGGLVDPEVHGRISTEEAIRKGFIDGRAAQRLQDISSYAKILTCPKTKLKISYKDAMNRSMVEDITGLRLLEAASVSSKGLPSPYNMSAPGSRSGSRSGSRSGSRSGSRSGSRRGSFDATGNSSYSYSYSFSSSSIGGY.

The tract at residues Met-1 to Glu-21 is disordered. The interaction with PKP1, JUP, PKP2 stretch occupies residues Met-1 to Glu-596. The tract at residues Met-1 to Lys-1068 is globular 1. Ser-22 bears the Phosphoserine mark. Thr-59 is modified (phosphothreonine). The residue at position 65 (Ser-65) is a Phosphoserine. A Phosphotyrosine modification is found at Tyr-68. Thr-73 is subject to Phosphothreonine. Phosphoserine is present on residues Ser-177, Ser-178, and Ser-188. 2 Spectrin repeats span residues Ser-190–Gln-283 and Leu-284–Asn-387. The Spectrin 3a repeat unit spans residues Ala-388–Val-458. One can recognise an SH3 domain in the interval Asn-470–Pro-527. The stretch at Asn-528–Lys-557 is one Spectrin 3b repeat. Spectrin repeat units lie at residues Ser-558–Pro-639, Val-666–Ser-781, and Val-782–Lys-895. Positions Lys-1034–Gln-1956 form a coiled coil. The interval Phe-1069 to Arg-1957 is central fibrous rod domain. Phosphoserine is present on residues Ser-1670, Ser-1720, and Ser-2036. The tract at residues Pro-1958 to Gly-2882 is globular 2. The segment at Thr-1972–Met-2220 is 4.5 X 38 AA tandem repeats (Domain A). Plectin repeat units follow at residues Gln-2021–Thr-2057, Val-2058–Arg-2095, Gln-2096–Gly-2133, Met-2134–Tyr-2171, Asn-2175–Gly-2209, Leu-2210–Val-2245, Lys-2263–Ala-2300, Leu-2301–Lys-2338, Glu-2339–Gly-2376, Ile-2377–Ser-2414, Ser-2418–Gly-2452, Ser-2468–Phe-2505, Thr-2519–Phe-2556, Ser-2622–Gly-2659, Gln-2660–Ala-2697, Gln-2736–Ala-2773, and Gln-2774–Gly-2811. Phosphoserine is present on residues Ser-2219, Ser-2221, and Ser-2237. The 4.5 X 38 AA tandem repeats (Domain B) stretch occupies residues Asp-2256 to Leu-2458. Gln-2492 is lipidated: Omega-hydroxyceramide glutamate ester. A 4.5 X 38 AA tandem repeats (Domain C) region spans residues Leu-2621–Ala-2833. Residues Ser-2822 and Ser-2827 each carry the phosphoserine modification. Residues Ser-2822–Tyr-2883 are disordered. Residue Tyr-2829 is modified to Phosphotyrosine. Residues Ser-2832 and Ser-2836 each carry the phosphoserine modification. Residues Gly-2835–Arg-2858 are 6 X 4 AA tandem repeats of G-S-R-[SR]. The segment covering Gly-2835 to Arg-2858 has biased composition (low complexity). Omega-N-methylarginine occurs at positions 2837 and 2858. Position 2860 is a phosphoserine (Ser-2860). Thr-2864 carries the phosphothreonine modification. Low complexity predominate over residues Ser-2867–Tyr-2883. At Ser-2879 the chain carries Phosphoserine.

It belongs to the plakin or cytolinker family. As to quaternary structure, homodimer. Interacts with COL17A1 (via cytoplasmic region). Interacts with DSC2. Interacts with PKP1. Interacts with PKP2. Interacts weakly with TMEM65. Post-translationally, phosphorylation at Ser-2860 increases association with intermediate filament cytokeratin, potentially facilitating interaction between desmosome junctions and intermediate filament architecture. As to expression, expressed in undifferentiated keratinocytes of the epidermis at birth, expression increases as differentiation proceeds (at protein level). Abundantly expressed in the suprabasal layers and weakly in the basal layers of the outer hair root sheath (at protein level). Expressed at intercalated disks in cardiomyocytes (at protein level).

The protein resides in the cell junction. It localises to the desmosome. Its subcellular location is the cell membrane. The protein localises to the cytoplasm. Functionally, major high molecular weight protein of desmosomes. Regulates profibrotic gene expression in cardiomyocytes via activation of the MAPK14/p38 MAPK signaling cascade and increase in TGFB1 protein abundance. This is Desmoplakin from Mus musculus (Mouse).